We begin with the raw amino-acid sequence, 175 residues long: Transcriptional repressor NrdR (175 aa).

A zinc finger lies at 3–32 (CPYCSHPDTKVIDSRDVDDGVRRRRECVVC). The region spanning 47-137 (LFVVKKDQRR…VYREFTDITQ (91 aa)) is the ATP-cone domain.

Belongs to the NrdR family. Zn(2+) is required as a cofactor.

Functionally, negatively regulates transcription of bacterial ribonucleotide reductase nrd genes and operons by binding to NrdR-boxes. This is Transcriptional repressor NrdR from Dehalococcoides mccartyi (strain ATCC BAA-2266 / KCTC 15142 / 195) (Dehalococcoides ethenogenes (strain 195)).